Here is an 839-residue protein sequence, read N- to C-terminus: Sodium/hydrogen exchanger 3 (839 aa).

A signal peptide spans 1 to 32 (MPLGVRGTRREFRFPVWGLLLLALWMLPRALG). At 33–56 (VEEIPGPDSHEKQGFQIVTFKWHH) the chain is on the extracellular side. Residues 57 to 79 (VQDPYIIALWILVASLAKIVFHL) traverse the membrane as a helical segment. The Cytoplasmic portion of the chain corresponds to 80-87 (SHKVTSVV). A helical membrane pass occupies residues 88-107 (PESALLIVLGLILGGIVWAA). Residues 108–116 (DHIASFTLT) lie on the Extracellular side of the membrane. A helical transmembrane segment spans residues 117-134 (PTVFFFYLLPPIVLDAGY). At 135–137 (FMP) the chain is on the cytoplasmic side. The helical transmembrane segment at 138–173 (NRLFFGNLGTILLYAVIGTVWNAATTGLSLYGVYLS) threads the bilayer. 3 residues coordinate a 1,2-diacyl-sn-glycero-3-phospho-(1D-myo-inositol): glycine 143, glycine 146, and threonine 147. Residues 174–186 (GIMGDLSIGLLDF) lie on the Extracellular side of the membrane. Residues 187-208 (LLFGSLIAAVDPVAVLAVFEEV) traverse the membrane as a helical segment. At 209–210 (HV) the chain is on the cytoplasmic side. A helical membrane pass occupies residues 211 to 242 (NDVLFIIVFGESLLNDAVTVVLYNVFDSFVSL). Topologically, residues 243-249 (GADKVTG) are extracellular. Residues 250–284 (VDCVKGIVSFFVVSLGGTLIGIIFAFLLSLVTRFT) form a helical membrane-spanning segment. The Cytoplasmic segment spans residues 285–286 (KH). The chain crosses the membrane as a helical span at residues 287–309 (VRIIEPGFVFIISYLSYLTSEML). At 310 to 311 (SL) the chain is on the extracellular side. The chain crosses the membrane as a helical span at residues 312 to 328 (SAILAITFCGICCQKYV). Over 329–335 (KANISEQ) the chain is Cytoplasmic. Residues 336–364 (SATTVRYTMKMLASGAETIIFMFLGISAV) traverse the membrane as a helical segment. Topologically, residues 365 to 372 (DPAIWTWN) are extracellular. A helical membrane pass occupies residues 373–394 (TAFILLTLVFISVYRAIGVVLQ). Over 395–407 (TWLLNKYRMVQLE) the chain is Cytoplasmic. Methionine 403 contributes to the a 1,2-diacyl-sn-glycero-3-phospho-(1D-myo-inositol) binding site. The helical transmembrane segment at 408 to 431 (IIDQVVMSYGGLRGAVAYALVVLL) threads the bilayer. The Extracellular segment spans residues 432–438 (DEKKVKE). A helical membrane pass occupies residues 439 to 472 (KNLFVSTTIIVVFFTVIFQGLTIKPLVQWLKVKK). The Cytoplasmic portion of the chain corresponds to 473–839 (SEHREPKLNE…RSFLPESTHM (367 aa)). A 1,2-diacyl-sn-glycero-3-phospho-(1D-myo-inositol) contacts are provided by glutamine 502, isoleucine 503, and histidine 505. Serine 560 and serine 568 each carry phosphoserine. Positions 581–595 (RPSTVEASVSYLLRE) are interaction with EZR. The interval 596–673 (NVSTVCLDMQ…RKRLESFKST (78 aa)) is interaction with NHERF4. Residues 597–701 (VSTVCLDMQA…GQKRRNSSIP (105 aa)) form an interaction with AHCYL1 region. Phosphoserine is present on residues serine 598 and serine 613. At serine 669 the chain carries Phosphoserine; by SGK1. Residues 688-697 (KRERGQKRRN) are compositionally biased toward basic residues. The disordered stretch occupies residues 688–710 (KRERGQKRRNSSIPNGKIPMESP). A phosphoserine mark is found at serine 724, serine 815, and serine 818.

It belongs to the monovalent cation:proton antiporter 1 (CPA1) transporter (TC 2.A.36) family. Homodimer. Found in the forms of complex and dynamic macromolecular complexes. Binds NHERF1 and NHERF2. Interacts with CHP1, CHP2 and SHANK2. Interacts with NHERF4 and interactions decrease in response to elevated calcium ion levels. Interacts with PDZK1 (via C-terminal PDZ domain). Interacts with AHCYL1; the interaction is required for SLC9A3 activity. Interacts with EZR; interaction targets SLC9A3 to the apical membrane. Interacts with SNX27 (via PDZ domains); directs SLC9A3 membrane insertion from early endosomes to the plasma membrane. Post-translationally, phosphorylated by PKA, which inhibits activity. Phosphorylation at Ser-669 by SGK1 is associated with increased abundance at the cell membrane.

Its subcellular location is the apical cell membrane. The protein resides in the cell membrane. It localises to the recycling endosome membrane. The protein localises to the early endosome membrane. The catalysed reaction is Na(+)(in) + H(+)(out) = Na(+)(out) + H(+)(in). Seems to switch between active and inactive modes in response to various stimuli. Activated directly or indirectly by membrane phosphatidylinositol (PIs). Regulated by a variety of auxiliary proteins, which facilitate the maturation, cell surface expression and function of the transporter. Inhibited specifically by the drug tenapanor. In terms of biological role, plasma membrane Na(+)/H(+) antiporter. Exchanges intracellular H(+) ions for extracellular Na(+) in 1:1 stoichiometry, playing a key role in salt and fluid absorption and pH homeostasis. Major apical Na(+)/H(+) exchanger in kidney and intestine playing an important role in renal and intestine Na(+) absorption and blood pressure regulation. The chain is Sodium/hydrogen exchanger 3 (SLC9A3) from Didelphis virginiana (North American opossum).